Here is a 244-residue protein sequence, read N- to C-terminus: Derlin-2.1 (244 aa).

Over 1–21 the chain is Cytoplasmic; it reads MAQAVEEWYKQMPIITRSYLT. The chain crosses the membrane as a helical span at residues 22 to 42; sequence AAVVTTVGCSLEIISPYNLYL. Over 43–96 the chain is Lumenal; that stretch reads NPTLVVKQYQFWRLVTNFLYFRKMDLDFLFHMFFLARYCKLLEENSFRGKTADF. A helical membrane pass occupies residues 97-117; that stretch reads LYMLLFGATVLTGIVLIGGMI. At 118–121 the chain is on the cytoplasmic side; that stretch reads PYLS. Residues 122–142 traverse the membrane as a helical segment; sequence VSFSKIIFLSNSLTFMMVYVW. At 143–152 the chain is on the lumenal side; that stretch reads SKQNPYIHMS. Residues 153 to 173 form a helical membrane-spanning segment; it reads FLGLFTFTAAYLPWVLLGFSI. Topologically, residues 174 to 244 are cytoplasmic; the sequence is LVGASAWGDF…HAPFDEIHQD (71 aa).

It belongs to the derlin family.

It is found in the endoplasmic reticulum membrane. May be involved in the degradation process of specific misfolded endoplasmic reticulum (ER) luminal proteins. This is Derlin-2.1 (DER2.1) from Arabidopsis thaliana (Mouse-ear cress).